The sequence spans 267 residues: Myeloid leukemia factor 1 (267 aa).

Phosphoserine is present on residues S6, S8, S32, and S34. Residues 39 to 67 (RDLLSISDGRGRTHNRRERDDGEDSLTHA) form a disordered region. An interaction with COPS3 region spans residues 50–125 (RTHNRRERDD…VGDEPPKVFQ (76 aa)).

The protein belongs to the MLF family. In terms of assembly, interacts with CENPU. Also interacts with NRBP1/MADM, YWHAZ/14-3-3-zeta and HNRPUL2/MANP. NRBP1 recruits a serine kinase which phosphorylates both itself and MLF1. Phosphorylated MLF1 then binds to YWHAZ and is retained in the cytoplasm. Retained in the nucleus by binding to HNRPUL2. Binds to COPS3/CSN3 which is required for suppression of COP1 and activation of p53. In terms of processing, phosphorylation is required for binding to YWHAZ. Highly expressed in skeletal muscle, heart, testis. Also found in lung, but not in spleen, thymus, bone marrow, liver and kidney.

It is found in the cytoplasm. It localises to the nucleus. The protein localises to the cell projection. The protein resides in the cilium. Its subcellular location is the cytoskeleton. It is found in the cilium basal body. In terms of biological role, involved in lineage commitment of primary hemopoietic progenitors by restricting erythroid formation and enhancing myeloid formation. Interferes with erythropoietin-induced erythroid terminal differentiation by preventing cells from exiting the cell cycle through suppression of CDKN1B/p27Kip1 levels. Suppresses COP1 activity via CSN3 which activates p53 and induces cell cycle arrest. Binds DNA and affects the expression of a number of genes so may function as a transcription factor in the nucleus. The sequence is that of Myeloid leukemia factor 1 (Mlf1) from Mus musculus (Mouse).